Consider the following 573-residue polypeptide: Probable zinc metallopeptidase EGY3, chloroplastic (573 aa).

Residues 1-50 (MASLFVSTPSSSLTLKSCHSLHLRRFDRAEFSNFGKASVNQTTRSRHSLR) constitute a chloroplast transit peptide. Residues 38-105 (SVNQTTRSRH…EKKSKQQEMD (68 aa)) form a disordered region. Basic and acidic residues-rich tracts occupy residues 52-62 (SAEDDRVREPV) and 96-105 (EKKSKQQEMD). Residues 122–185 (EAAIKLEKTR…KALDLNKLKS (64 aa)) adopt a coiled-coil conformation. Helical transmembrane passes span 274-294 (VSAIALCVTTFGTIALMSGFF), 305-325 (IANVVPLFGGFLSILGVSEIA), 376-396 (ASAYLTSLLLAAAAFISDGSF), 414-434 (PLLSFVQFVVGPYADDLGNVL), 441-461 (VGVPVDPLAFAGLLGMVVTSL), 493-513 (LLLGIGGLSGSVLCLAWGLFA), and 536-556 (FAWGIVLGLICFLTLFPNSGG).

This sequence belongs to the peptidase M50B family.

It is found in the plastid. The protein resides in the chloroplast membrane. Functionally, probable membrane-associated metalloprotease that may be involved in chloroplast development. The sequence is that of Probable zinc metallopeptidase EGY3, chloroplastic (EGY3) from Arabidopsis thaliana (Mouse-ear cress).